A 371-amino-acid chain; its full sequence is Cuticle collagen 71 (371 aa).

A helical transmembrane segment spans residues 38–60 (GYAAVTFSTVSVICFCVTMPVVF). Disordered regions lie at residues 108–127 (AGYD…GGDA) and 153–371 (EGPH…GTRR). Over residues 174-186 (PGPPGPPGPPGRP) the composition is skewed to pro residues. Low complexity predominate over residues 188–201 (PNGKAGANGLNGNP). The segment covering 202–222 (GRPPEAPCEPVTPPPCPPCPA) has biased composition (pro residues). The segment covering 223 to 240 (GPKGAPGQAGYPGADGQP) has biased composition (low complexity). The region spanning 223–280 (GPKGAPGQAGYPGADGQPGSQGDNGEKGSDGAAGEKGRPGPLGKIGEPGATGETGENA) is the Collagen-like domain. Residues 246–260 (NGEKGSDGAAGEKGR) show a composition bias toward basic and acidic residues. Over residues 314–323 (AGAPGAPGEN) the composition is skewed to low complexity. Residues 340 to 349 (HDGKAGRAGE) are compositionally biased toward basic and acidic residues.

Belongs to the cuticular collagen family. Collagen polypeptide chains are complexed within the cuticle by disulfide bonds and other types of covalent cross-links.

It localises to the membrane. Its subcellular location is the nucleus. In terms of biological role, probable cuticular collagen-like protein. Nematode cuticles are composed largely of collagen-like proteins. The cuticle functions both as an exoskeleton and as a barrier to protect the worm from its environment. Acts downstream of the Wnt signaling pathway, perhaps in the formation of the adult cuticle. The chain is Cuticle collagen 71 from Caenorhabditis elegans.